Reading from the N-terminus, the 179-residue chain is Large ribosomal subunit protein uL6 (179 aa).

This sequence belongs to the universal ribosomal protein uL6 family. As to quaternary structure, part of the 50S ribosomal subunit.

In terms of biological role, this protein binds to the 23S rRNA, and is important in its secondary structure. It is located near the subunit interface in the base of the L7/L12 stalk, and near the tRNA binding site of the peptidyltransferase center. The protein is Large ribosomal subunit protein uL6 of Buchnera aphidicola subsp. Baizongia pistaciae (strain Bp).